Here is a 351-residue protein sequence, read N- to C-terminus: MPCDTADNWARYEGQDNAIMVARRGSVNSAFVTNSSQYHQAEDTNGNCFINARNDNWDNRDCNACVGHSDFSIDGVIGSGGFGSVFLGRYCGRRVAVKSVRQCSRNKEASRQSFQAEFNALLLRHDNIVSVLATTAYEDFDSGAFIIMEYAGRNLQQIVNDPGSSLSPTRRTKYALHIIRALHYTHSQGIAHLDVKPANVIVDSNTDVCRLADFGCSQRVSEGEGRDSFTSRSYLTGTFAYRAPELLRGRPPTTKADIYSYGVTLWQMLTRETPFAGENHHVVIFGVVAQNLRPSLPENANDAWYESLVTRCWEGRVADRPSAAEILLALERRTDDTENLPRDLKRRHGTT.

One can recognise a Protein kinase domain in the interval 71 to 340 (FSIDGVIGSG…ERRTDDTENL (270 aa)). Residues 77–85 (IGSGGFGSV) and Lys-98 contribute to the ATP site. The Proton acceptor role is filled by Asp-194.

The protein belongs to the protein kinase superfamily. Ser/Thr protein kinase family.

The catalysed reaction is L-seryl-[protein] + ATP = O-phospho-L-seryl-[protein] + ADP + H(+). It catalyses the reaction L-threonyl-[protein] + ATP = O-phospho-L-threonyl-[protein] + ADP + H(+). In terms of biological role, suppresses the mitotic cell cycle in oocytes, forcing them to undergo meiosis II to produce haploid gametes. Acts as a MAPK kinase kinase (MAP3K) that acts upstream of MAP kinase in oocytes. The protein is Serine/threonine-protein kinase mos of Patiria pectinifera (Starfish).